A 207-amino-acid chain; its full sequence is Uridine kinase (207 aa).

14–21 (GGSGSGKT) contributes to the ATP binding site.

Belongs to the uridine kinase family.

Its subcellular location is the cytoplasm. It carries out the reaction uridine + ATP = UMP + ADP + H(+). The catalysed reaction is cytidine + ATP = CMP + ADP + H(+). It participates in pyrimidine metabolism; CTP biosynthesis via salvage pathway; CTP from cytidine: step 1/3. It functions in the pathway pyrimidine metabolism; UMP biosynthesis via salvage pathway; UMP from uridine: step 1/1. This Deinococcus deserti (strain DSM 17065 / CIP 109153 / LMG 22923 / VCD115) protein is Uridine kinase.